Here is a 424-residue protein sequence, read N- to C-terminus: UPF0415 protein C7orf25 homolog (424 aa).

This sequence belongs to the UPF0415 family.

The sequence is that of UPF0415 protein C7orf25 homolog from Xenopus laevis (African clawed frog).